Reading from the N-terminus, the 157-residue chain is 2-C-methyl-D-erythritol 2,4-cyclodiphosphate synthase (157 aa).

The a divalent metal cation site is built by Asp8 and His10. 4-CDP-2-C-methyl-D-erythritol 2-phosphate contacts are provided by residues 8–10 (DVH) and 34–35 (HS). His42 is an a divalent metal cation binding site. 4-CDP-2-C-methyl-D-erythritol 2-phosphate-binding positions include 56 to 58 (DIG), 61 to 65 (FPDTD), 100 to 106 (AQAPKMA), 132 to 135 (TTSE), Phe139, and Arg142.

This sequence belongs to the IspF family. In terms of assembly, homotrimer. Requires a divalent metal cation as cofactor.

The enzyme catalyses 4-CDP-2-C-methyl-D-erythritol 2-phosphate = 2-C-methyl-D-erythritol 2,4-cyclic diphosphate + CMP. It participates in isoprenoid biosynthesis; isopentenyl diphosphate biosynthesis via DXP pathway; isopentenyl diphosphate from 1-deoxy-D-xylulose 5-phosphate: step 4/6. Its function is as follows. Involved in the biosynthesis of isopentenyl diphosphate (IPP) and dimethylallyl diphosphate (DMAPP), two major building blocks of isoprenoid compounds. Catalyzes the conversion of 4-diphosphocytidyl-2-C-methyl-D-erythritol 2-phosphate (CDP-ME2P) to 2-C-methyl-D-erythritol 2,4-cyclodiphosphate (ME-CPP) with a corresponding release of cytidine 5-monophosphate (CMP). This chain is 2-C-methyl-D-erythritol 2,4-cyclodiphosphate synthase, found in Photobacterium profundum (strain SS9).